The following is a 132-amino-acid chain: tRNA (cytidine(56)-2'-O)-methyltransferase (132 aa).

S-adenosyl-L-methionine-binding positions include leucine 35, glycine 65–valine 69, and isoleucine 83–glutamate 90.

The protein belongs to the aTrm56 family. As to quaternary structure, homodimer.

It is found in the cytoplasm. The catalysed reaction is cytidine(56) in tRNA + S-adenosyl-L-methionine = 2'-O-methylcytidine(56) in tRNA + S-adenosyl-L-homocysteine + H(+). In terms of biological role, specifically catalyzes the AdoMet-dependent 2'-O-ribose methylation of cytidine at position 56 in tRNAs. In Sulfolobus acidocaldarius (strain ATCC 33909 / DSM 639 / JCM 8929 / NBRC 15157 / NCIMB 11770), this protein is tRNA (cytidine(56)-2'-O)-methyltransferase.